Here is a 173-residue protein sequence, read N- to C-terminus: Alkyl hydroperoxide reductase AhpD (173 aa).

Catalysis depends on C131, which acts as the Proton donor. A disulfide bond links C131 and C134. C134 serves as the catalytic Cysteine sulfenic acid (-SOH) intermediate.

The protein belongs to the AhpD family.

It carries out the reaction N(6)-[(R)-dihydrolipoyl]-L-lysyl-[lipoyl-carrier protein] + a hydroperoxide = N(6)-[(R)-lipoyl]-L-lysyl-[lipoyl-carrier protein] + an alcohol + H2O. Antioxidant protein with alkyl hydroperoxidase activity. Required for the reduction of the AhpC active site cysteine residues and for the regeneration of the AhpC enzyme activity. This is Alkyl hydroperoxide reductase AhpD from Rhizorhabdus wittichii (strain DSM 6014 / CCUG 31198 / JCM 15750 / NBRC 105917 / EY 4224 / RW1) (Sphingomonas wittichii).